A 315-amino-acid chain; its full sequence is MTTMQLDSDGRLRHLLTLEGLPRATLLQLLDRAGQIRDAAVGRVGKRSVLAGTAVCTLFFEPSTRTRSSFHLAAQRLGADVLNFDASTSSTRKGETARDTLKNLEAMGVRGFVVRHPEDGAVERLAEAAGEGTALINAGDGRSAHPTQGLLDMLTLRQAKGTDFSKLKVVIVGDVKHSRVARSDLHALRTLGAGEIRVCGPASLLPDDDMLDGCVVGEDFDAMLEGADALMMLRLQRERMEEGLVPSLEQYHADYGLTRERLARAGRDAAVLHPGPINRGVEITDEVADGAQSCVLRQVANGVAVRMAVLETLLG.

Arg65 and Thr66 together coordinate carbamoyl phosphate. Residue Lys93 coordinates L-aspartate. Carbamoyl phosphate-binding residues include Arg115, His145, and Gln148. 2 residues coordinate L-aspartate: Arg179 and Arg234. Carbamoyl phosphate-binding residues include Gly275 and Pro276.

Belongs to the aspartate/ornithine carbamoyltransferase superfamily. ATCase family. Heterododecamer (2C3:3R2) of six catalytic PyrB chains organized as two trimers (C3), and six regulatory PyrI chains organized as three dimers (R2).

The catalysed reaction is carbamoyl phosphate + L-aspartate = N-carbamoyl-L-aspartate + phosphate + H(+). It functions in the pathway pyrimidine metabolism; UMP biosynthesis via de novo pathway; (S)-dihydroorotate from bicarbonate: step 2/3. Its function is as follows. Catalyzes the condensation of carbamoyl phosphate and aspartate to form carbamoyl aspartate and inorganic phosphate, the committed step in the de novo pyrimidine nucleotide biosynthesis pathway. The chain is Aspartate carbamoyltransferase catalytic subunit from Xanthomonas campestris pv. campestris (strain 8004).